Consider the following 317-residue polypeptide: Acetyl-coenzyme A carboxylase carboxyl transferase subunit alpha (317 aa).

One can recognise a CoA carboxyltransferase C-terminal domain in the interval 39-293 (RLESKAAAAL…GDALAEALTG (255 aa)).

The protein belongs to the AccA family. As to quaternary structure, acetyl-CoA carboxylase is a heterohexamer composed of biotin carboxyl carrier protein (AccB), biotin carboxylase (AccC) and two subunits each of ACCase subunit alpha (AccA) and ACCase subunit beta (AccD).

It localises to the cytoplasm. The enzyme catalyses N(6)-carboxybiotinyl-L-lysyl-[protein] + acetyl-CoA = N(6)-biotinyl-L-lysyl-[protein] + malonyl-CoA. Its pathway is lipid metabolism; malonyl-CoA biosynthesis; malonyl-CoA from acetyl-CoA: step 1/1. In terms of biological role, component of the acetyl coenzyme A carboxylase (ACC) complex. First, biotin carboxylase catalyzes the carboxylation of biotin on its carrier protein (BCCP) and then the CO(2) group is transferred by the carboxyltransferase to acetyl-CoA to form malonyl-CoA. The polypeptide is Acetyl-coenzyme A carboxylase carboxyl transferase subunit alpha (Methylobacterium nodulans (strain LMG 21967 / CNCM I-2342 / ORS 2060)).